We begin with the raw amino-acid sequence, 160 residues long: uncharacterized protein (160 aa).

One can recognise an N-acetyltransferase domain in the interval 5-160 (ISLSFYKPEH…GEQLILHHFL (156 aa)).

This is an uncharacterized protein from Bacillus subtilis (strain 168).